The following is a 314-amino-acid chain: Small ribosomal subunit protein uS2 (314 aa).

2 stretches are compositionally biased toward basic and acidic residues: residues 244 to 265 and 271 to 287; these read GGHD…GHKD and DRRG…EDRA. Residues 244 to 314 are disordered; sequence GGHDERREQE…AAPEAAPAKE (71 aa). Positions 302–314 are enriched in low complexity; it reads APAAAPEAAPAKE.

It belongs to the universal ribosomal protein uS2 family.

The chain is Small ribosomal subunit protein uS2 from Anaeromyxobacter dehalogenans (strain 2CP-C).